Consider the following 112-residue polypeptide: Tyrosine-protein phosphatase 8 (112 aa).

Residues 1–112 (ENSTAIVMIT…ANSEYGPVVV (112 aa)) form the Tyrosine-protein phosphatase domain.

This sequence belongs to the protein-tyrosine phosphatase family.

It carries out the reaction O-phospho-L-tyrosyl-[protein] + H2O = L-tyrosyl-[protein] + phosphate. This chain is Tyrosine-protein phosphatase 8 (STY-8), found in Styela plicata (Wrinkled sea squirt).